A 115-amino-acid chain; its full sequence is NADH-ubiquinone oxidoreductase chain 3 (115 aa).

The next 3 helical transmembrane spans lie at 4–24, 55–75, and 86–106; these read LMAL…AFWL, FFLV…LLPL, and TMML…AYEW.

It belongs to the complex I subunit 3 family. In terms of assembly, core subunit of respiratory chain NADH dehydrogenase (Complex I) which is composed of 45 different subunits. Interacts with TMEM186. Interacts with TMEM242.

It is found in the mitochondrion inner membrane. It carries out the reaction a ubiquinone + NADH + 5 H(+)(in) = a ubiquinol + NAD(+) + 4 H(+)(out). Functionally, core subunit of the mitochondrial membrane respiratory chain NADH dehydrogenase (Complex I) which catalyzes electron transfer from NADH through the respiratory chain, using ubiquinone as an electron acceptor. Essential for the catalytic activity of complex I. The chain is NADH-ubiquinone oxidoreductase chain 3 from Peromyscus gossypinus (Cotton deermouse).